The sequence spans 270 residues: Extracellular metalloprotease MCYG_04966 (270 aa).

Positions 1–19 (MRLSLFLSGLAAAGSIVSA) are cleaved as a signal peptide. Asparagine 135 is a glycosylation site (N-linked (GlcNAc...) asparagine). Histidine 184 contacts Zn(2+). Glutamate 185 is an active-site residue. Histidine 188 lines the Zn(2+) pocket. Asparagine 199 is a glycosylation site (N-linked (GlcNAc...) asparagine). Residues 208 to 227 (VADTPPQSKKTSGCPNSQDS) are disordered. A compositionally biased stretch (polar residues) spans 212-227 (PPQSKKTSGCPNSQDS). The cysteines at positions 221 and 247 are disulfide-linked.

Belongs to the peptidase M43B family.

Its subcellular location is the secreted. Its function is as follows. Secreted metalloproteinase that allows assimilation of proteinaceous substrates. Plays a pivotal role as a pathogenicity determinant during infections and contributes to the ability of the pathogen to persist within the mammalian host. This is Extracellular metalloprotease MCYG_04966 from Arthroderma otae (strain ATCC MYA-4605 / CBS 113480) (Microsporum canis).